The primary structure comprises 117 residues: Putative membrane protein insertion efficiency factor (117 aa).

It belongs to the UPF0161 family.

It localises to the cell inner membrane. Functionally, could be involved in insertion of integral membrane proteins into the membrane. The chain is Putative membrane protein insertion efficiency factor from Bartonella bacilliformis (strain ATCC 35685 / KC583 / Herrer 020/F12,63).